Consider the following 710-residue polypeptide: Early transcription factor 82 kDa subunit (710 aa).

This sequence belongs to the poxviridae VETF large subunit family. In terms of assembly, heterodimer of a 70 kDa and a 82 kDa subunit. Part of the early transcription complex composed of ETF, RAP94/OPG109, and the DNA-directed RNA polymerase.

The protein localises to the virion. In terms of biological role, acts with RNA polymerase to initiate transcription from early gene promoters. Is recruited by the RPO-associated protein of 94 kDa RAP94/OPG109 to form the early transcription complex, which also contains the core RNA polymerase. ETF heterodimer binds to early gene promoters. The sequence is that of Early transcription factor 82 kDa subunit (OPG133) from Monkeypox virus.